The primary structure comprises 68 residues: Large ribosomal subunit protein bL32 (68 aa).

It belongs to the bacterial ribosomal protein bL32 family.

This chain is Large ribosomal subunit protein bL32, found in Orientia tsutsugamushi (strain Boryong) (Rickettsia tsutsugamushi).